Here is a 332-residue protein sequence, read N- to C-terminus: Ferredoxin--NADP reductase 2 (332 aa).

FAD contacts are provided by E37, Q45, Y50, V90, F124, D285, and T326.

It belongs to the ferredoxin--NADP reductase type 2 family. As to quaternary structure, homodimer. FAD is required as a cofactor.

The enzyme catalyses 2 reduced [2Fe-2S]-[ferredoxin] + NADP(+) + H(+) = 2 oxidized [2Fe-2S]-[ferredoxin] + NADPH. The polypeptide is Ferredoxin--NADP reductase 2 (Bacillus pumilus (strain SAFR-032)).